We begin with the raw amino-acid sequence, 438 residues long: Serine hydroxymethyltransferase (438 aa).

(6S)-5,6,7,8-tetrahydrofolate is bound by residues leucine 119 and 123–125 (GHL). Position 228 is an N6-(pyridoxal phosphate)lysine (lysine 228). Residue 370–372 (SPF) coordinates (6S)-5,6,7,8-tetrahydrofolate.

It belongs to the SHMT family. Homodimer. Pyridoxal 5'-phosphate is required as a cofactor.

Its subcellular location is the cytoplasm. It catalyses the reaction (6R)-5,10-methylene-5,6,7,8-tetrahydrofolate + glycine + H2O = (6S)-5,6,7,8-tetrahydrofolate + L-serine. The protein operates within one-carbon metabolism; tetrahydrofolate interconversion. It functions in the pathway amino-acid biosynthesis; glycine biosynthesis; glycine from L-serine: step 1/1. Its function is as follows. Catalyzes the reversible interconversion of serine and glycine with tetrahydrofolate (THF) serving as the one-carbon carrier. This reaction serves as the major source of one-carbon groups required for the biosynthesis of purines, thymidylate, methionine, and other important biomolecules. Also exhibits THF-independent aldolase activity toward beta-hydroxyamino acids, producing glycine and aldehydes, via a retro-aldol mechanism. The chain is Serine hydroxymethyltransferase from Pelodictyon phaeoclathratiforme (strain DSM 5477 / BU-1).